Here is a 792-residue protein sequence, read N- to C-terminus: Molybdenum cofactor sulfurase (792 aa).

Lys-246 carries the post-translational modification N6-(pyridoxal phosphate)lysine. Residue Cys-414 is part of the active site. The region spanning 646 to 792 (LRLLRQSSQR…LTCGDVVVVT (147 aa)) is the MOSC domain. Ser-748 carries the phosphoserine modification.

Belongs to the class-V pyridoxal-phosphate-dependent aminotransferase family. MOCOS subfamily. The cofactor is pyridoxal 5'-phosphate.

It carries out the reaction Mo-molybdopterin + L-cysteine + AH2 = thio-Mo-molybdopterin + L-alanine + A + H2O. The protein operates within cofactor biosynthesis; molybdopterin biosynthesis. Functionally, sulfurates the molybdenum cofactor. Sulfation of molybdenum is essential for xanthine dehydrogenase (XDH) and aldehyde oxidase (ADO) enzymes in which molybdenum cofactor is liganded by 1 oxygen and 1 sulfur atom in active form. The sequence is that of Molybdenum cofactor sulfurase from Drosophila pseudoobscura pseudoobscura (Fruit fly).